The primary structure comprises 98 residues: C-X-C motif chemokine 10 (98 aa).

The N-terminal stretch at Met-1–Gly-21 is a signal peptide. Arg-26 bears the Citrulline mark. Intrachain disulfides connect Cys-30–Cys-57 and Cys-32–Cys-74.

It belongs to the intercrine alpha (chemokine CxC) family. In terms of assembly, monomer, dimer, and tetramer. Interacts with CXCR3 (via N-terminus). In terms of tissue distribution, expressed in the spleen, thymus, lymph nodes and liver. Expressed in astrocytes, microglia, and neurons.

The protein localises to the secreted. Its function is as follows. Pro-inflammatory cytokine that is involved in a wide variety of processes such as chemotaxis, differentiation, and activation of peripheral immune cells, regulation of cell growth, apoptosis and modulation of angiostatic effects. Plays thereby an important role during viral infections by stimulating the activation and migration of immune cells to the infected sites. Mechanistically, binding of CXCL10 to the CXCR3 receptor activates G protein-mediated signaling and results in downstream activation of phospholipase C-dependent pathway, an increase in intracellular calcium production and actin reorganization. In turn, recruitment of activated Th1 lymphocytes occurs at sites of inflammation. Activation of the CXCL10/CXCR3 axis also plays an important role in neurons in response to brain injury for activating microglia, the resident macrophage population of the central nervous system, and directing them to the lesion site. This recruitment is an essential element for neuronal reorganization. The sequence is that of C-X-C motif chemokine 10 (Cxcl10) from Mus musculus (Mouse).